Consider the following 827-residue polypeptide: 4-hydroxy-3-methylbut-2-enyl diphosphate reductase (827 aa).

Residues 1 to 284 are 4-hydroxy-3-methylbut-2-enyl diphosphate reductase; sequence MEIIRAKHMG…MNIEKKVRGI (284 aa). C12 is a [4Fe-4S] cluster binding site. The (2E)-4-hydroxy-3-methylbut-2-enyl diphosphate site is built by H40 and H79. Dimethylallyl diphosphate contacts are provided by H40 and H79. Residues H40 and H79 each contribute to the isopentenyl diphosphate site. C101 serves as a coordination point for [4Fe-4S] cluster. H129 lines the (2E)-4-hydroxy-3-methylbut-2-enyl diphosphate pocket. H129 serves as a coordination point for dimethylallyl diphosphate. H129 lines the isopentenyl diphosphate pocket. The active-site Proton donor is the E131. T168 is a binding site for (2E)-4-hydroxy-3-methylbut-2-enyl diphosphate. [4Fe-4S] cluster is bound at residue C196. S224, S225, N226, and S268 together coordinate (2E)-4-hydroxy-3-methylbut-2-enyl diphosphate. The dimethylallyl diphosphate site is built by S224, S225, N226, and S268. Isopentenyl diphosphate-binding residues include S224, S225, N226, and S268. S1 motif domains are found at residues 477–545, 562–632, 649–716, and 733–802; these read GQIV…LSIK, DDEI…LGIK, DTVI…GSLK, and GTTV…LSIK.

This sequence in the N-terminal section; belongs to the IspH family. The cofactor is [4Fe-4S] cluster.

It catalyses the reaction isopentenyl diphosphate + 2 oxidized [2Fe-2S]-[ferredoxin] + H2O = (2E)-4-hydroxy-3-methylbut-2-enyl diphosphate + 2 reduced [2Fe-2S]-[ferredoxin] + 2 H(+). The enzyme catalyses dimethylallyl diphosphate + 2 oxidized [2Fe-2S]-[ferredoxin] + H2O = (2E)-4-hydroxy-3-methylbut-2-enyl diphosphate + 2 reduced [2Fe-2S]-[ferredoxin] + 2 H(+). Its pathway is isoprenoid biosynthesis; dimethylallyl diphosphate biosynthesis; dimethylallyl diphosphate from (2E)-4-hydroxy-3-methylbutenyl diphosphate: step 1/1. It functions in the pathway isoprenoid biosynthesis; isopentenyl diphosphate biosynthesis via DXP pathway; isopentenyl diphosphate from 1-deoxy-D-xylulose 5-phosphate: step 6/6. Catalyzes the conversion of 1-hydroxy-2-methyl-2-(E)-butenyl 4-diphosphate (HMBPP) into a mixture of isopentenyl diphosphate (IPP) and dimethylallyl diphosphate (DMAPP). Acts in the terminal step of the DOXP/MEP pathway for isoprenoid precursor biosynthesis. In Fusobacterium nucleatum subsp. nucleatum (strain ATCC 25586 / DSM 15643 / BCRC 10681 / CIP 101130 / JCM 8532 / KCTC 2640 / LMG 13131 / VPI 4355), this protein is 4-hydroxy-3-methylbut-2-enyl diphosphate reductase.